We begin with the raw amino-acid sequence, 397 residues long: 1-deoxy-D-xylulose 5-phosphate reductoisomerase (397 aa).

Thr-17, Gly-18, Ser-19, Ile-20, Asn-47, and Asn-130 together coordinate NADPH. A 1-deoxy-D-xylulose 5-phosphate-binding site is contributed by Lys-131. Residue Glu-132 coordinates NADPH. Asp-156 provides a ligand contact to Mn(2+). 4 residues coordinate 1-deoxy-D-xylulose 5-phosphate: Ser-157, Glu-158, Ser-182, and His-205. Glu-158 contributes to the Mn(2+) binding site. NADPH is bound at residue Gly-211. 1-deoxy-D-xylulose 5-phosphate contacts are provided by Ser-218, Asn-223, Lys-224, and Glu-227. Glu-227 contacts Mn(2+).

This sequence belongs to the DXR family. The cofactor is Mg(2+). Mn(2+) serves as cofactor.

It catalyses the reaction 2-C-methyl-D-erythritol 4-phosphate + NADP(+) = 1-deoxy-D-xylulose 5-phosphate + NADPH + H(+). It participates in isoprenoid biosynthesis; isopentenyl diphosphate biosynthesis via DXP pathway; isopentenyl diphosphate from 1-deoxy-D-xylulose 5-phosphate: step 1/6. In terms of biological role, catalyzes the NADPH-dependent rearrangement and reduction of 1-deoxy-D-xylulose-5-phosphate (DXP) to 2-C-methyl-D-erythritol 4-phosphate (MEP). The protein is 1-deoxy-D-xylulose 5-phosphate reductoisomerase of Rhizobium rhizogenes (strain K84 / ATCC BAA-868) (Agrobacterium radiobacter).